Here is a 366-residue protein sequence, read N- to C-terminus: Putative [LysW]-aminoadipate semialdehyde/glutamate semialdehyde transaminase (366 aa).

Residues 90-91 (GT) and Phe-117 each bind pyridoxal 5'-phosphate. A substrate-binding site is contributed by Arg-120. 202–205 (DEVQ) is a pyridoxal 5'-phosphate binding site. Lys-230 carries the N6-(pyridoxal phosphate)lysine modification. A substrate-binding site is contributed by Ser-254. A pyridoxal 5'-phosphate-binding site is contributed by Thr-255.

This sequence belongs to the class-III pyridoxal-phosphate-dependent aminotransferase family. LysJ subfamily. As to quaternary structure, homodimer. Pyridoxal 5'-phosphate serves as cofactor.

It localises to the cytoplasm. It catalyses the reaction [amino-group carrier protein]-C-terminal-gamma-(L-lysyl)-L-glutamate + 2-oxoglutarate = [amino-group carrier protein]-C-terminal-N-(1-carboxy-5-oxopentan-1-yl)-L-glutamine + L-glutamate. The enzyme catalyses [amino-group carrier protein]-C-terminal-gamma-(L-ornithyl)-L-glutamate + 2-oxoglutarate = [amino-group carrier protein]-C-terminal-gamma-(L-glutamyl-5-semialdehyde)-L-glutamate + L-glutamate. Its pathway is amino-acid biosynthesis; L-lysine biosynthesis via AAA pathway; L-lysine from L-alpha-aminoadipate (Thermus route): step 4/5. It functions in the pathway amino-acid biosynthesis; L-arginine biosynthesis. Its function is as follows. Involved in both the arginine and lysine biosynthetic pathways. The chain is Putative [LysW]-aminoadipate semialdehyde/glutamate semialdehyde transaminase from Pyrococcus furiosus (strain ATCC 43587 / DSM 3638 / JCM 8422 / Vc1).